The sequence spans 147 residues: Hemoglobin subunit epsilon (147 aa).

One can recognise a Globin domain in the interval 3–147 (HFTAEEKAAV…VAIALAHKYH (145 aa)). A phosphoserine mark is found at Ser14 and Ser51. The heme b site is built by His64 and His93.

Belongs to the globin family. As to quaternary structure, heterotetramer of two alpha chains and two epsilon chains in early embryonic hemoglobin Gower-2; two zeta chains and two epsilon chains in early embryonic hemoglobin Gower-1. As to expression, red blood cells.

Its function is as follows. The epsilon chain is a beta-type chain of early mammalian embryonic hemoglobin. The chain is Hemoglobin subunit epsilon (HBE1) from Pan paniscus (Pygmy chimpanzee).